A 184-amino-acid chain; its full sequence is UPF0398 protein BCB4264_A1614 (184 aa).

It belongs to the UPF0398 family.

This Bacillus cereus (strain B4264) protein is UPF0398 protein BCB4264_A1614.